The sequence spans 259 residues: Glutamate racemase (259 aa).

Substrate-binding positions include 9–10 (DS) and 41–42 (YG). The active-site Proton donor/acceptor is Cys73. 74 to 75 (NT) is a binding site for substrate. The active-site Proton donor/acceptor is the Cys183. Substrate is bound at residue 184-185 (TH).

The protein belongs to the aspartate/glutamate racemases family.

It catalyses the reaction L-glutamate = D-glutamate. The protein operates within cell wall biogenesis; peptidoglycan biosynthesis. Its function is as follows. Provides the (R)-glutamate required for cell wall biosynthesis. The sequence is that of Glutamate racemase from Shewanella frigidimarina (strain NCIMB 400).